The chain runs to 67 residues: DNA-directed RNA polymerase subunit omega (67 aa).

It belongs to the RNA polymerase subunit omega family. The RNAP catalytic core consists of 2 alpha, 1 beta, 1 beta' and 1 omega subunit. When a sigma factor is associated with the core the holoenzyme is formed, which can initiate transcription.

The enzyme catalyses RNA(n) + a ribonucleoside 5'-triphosphate = RNA(n+1) + diphosphate. Its function is as follows. Promotes RNA polymerase assembly. Latches the N- and C-terminal regions of the beta' subunit thereby facilitating its interaction with the beta and alpha subunits. In Paraburkholderia phymatum (strain DSM 17167 / CIP 108236 / LMG 21445 / STM815) (Burkholderia phymatum), this protein is DNA-directed RNA polymerase subunit omega.